We begin with the raw amino-acid sequence, 525 residues long: Ribosomal protein S6 kinase beta-1 (525 aa).

A TOS motif motif is present at residues 28-32; the sequence is FDIDL. Acidic residues predominate over residues 32 to 46; that stretch reads LDQPEDAGSEDELEE. Residues 32-54 form a disordered region; it reads LDQPEDAGSEDELEEGGQLNESM. One can recognise a Protein kinase domain in the interval 91–352; sequence FELLRVLGKG…AGEVQAHPFF (262 aa). ATP contacts are provided by residues 97–105 and Lys-123; that span reads LGKGGYGKV. Asp-218 (proton acceptor) is an active-site residue. The residue at position 252 (Thr-252) is a Phosphothreonine; by PDPK1. The AGC-kinase C-terminal domain maps to 353–423; that stretch reads RHINWEELLA…VAPSVLESVK (71 aa). The interval 380–399 is disordered; it reads SQFDSKFTRQTPVDSPDDST. Residues 381-399 are compositionally biased toward polar residues; the sequence is QFDSKFTRQTPVDSPDDST. Ser-394 carries the post-translational modification Phosphoserine. Phosphothreonine; by MTOR, NEK6 and NEK7 is present on Thr-412. The interval 424 to 525 is autoinhibitory domain; it reads EKFSFEPKIR…KRPEHLRMNL (102 aa). Phosphoserine is present on residues Ser-434 and Ser-441. Phosphothreonine is present on Thr-444. A phosphoserine mark is found at Ser-447 and Ser-452. Lys-516 bears the N6-acetyllysine mark.

Belongs to the protein kinase superfamily. AGC Ser/Thr protein kinase family. S6 kinase subfamily. Interacts with PPP1R9A/neurabin-1. Interacts with RPTOR. Interacts with IRS1. Interacts with EIF3B and EIF3C. Interacts with TRAF4. Interacts with POLDIP3. Interacts (via N-terminus) with IER5. In terms of processing, phosphorylation at Thr-412 is regulated by mTORC1. The phosphorylation at this site is maintained by an agonist-dependent autophosphorylation mechanism. Activated by phosphorylation at Thr-252 by PDPK1. Dephosphorylation by PPP1CC at Thr-412 in mitochondrion.

The protein resides in the cytoplasm. It localises to the synapse. Its subcellular location is the synaptosome. The protein localises to the mitochondrion outer membrane. It is found in the mitochondrion. The catalysed reaction is L-seryl-[protein] + ATP = O-phospho-L-seryl-[protein] + ADP + H(+). It catalyses the reaction L-threonyl-[protein] + ATP = O-phospho-L-threonyl-[protein] + ADP + H(+). Activation requires multiple phosphorylation events on serine/threonine residues. Activation appears to be first mediated by phosphorylation of multiple sites in the autoinhibitory domain, which facilitates phosphorylation at Thr-412, disrupting the autoinhibitory mechanism and allowing phosphorylation of Thr-252 by PDPK1. The active conformation of the kinase is believed to be stabilized by a mechanism involving three conserved phosphorylation sites located in the kinase domain activation loop (Thr-252) and in the AGC-kinase C-terminal domain (Ser-394 in the middle of the tail/linker region and Thr-412 within a hydrophobic motif at its end). Activated by mTORC1; isoform Alpha I and isoform Alpha II are sensitive to rapamycin, which inhibits activating phosphorylation at Thr-412. Activated by PDPK1. Its function is as follows. Serine/threonine-protein kinase that acts downstream of mTOR signaling in response to growth factors and nutrients to promote cell proliferation, cell growth and cell cycle progression. Regulates protein synthesis through phosphorylation of EIF4B, RPS6 and EEF2K, and contributes to cell survival by repressing the pro-apoptotic function of BAD. Under conditions of nutrient depletion, the inactive form associates with the EIF3 translation initiation complex. Upon mitogenic stimulation, phosphorylation by the mechanistic target of rapamycin complex 1 (mTORC1) leads to dissociation from the EIF3 complex and activation. The active form then phosphorylates and activates several substrates in the pre-initiation complex, including the EIF2B complex and the cap-binding complex component EIF4B. Also controls translation initiation by phosphorylating a negative regulator of EIF4A, PDCD4, targeting it for ubiquitination and subsequent proteolysis. Promotes initiation of the pioneer round of protein synthesis by phosphorylating POLDIP3/SKAR. In response to IGF1, activates translation elongation by phosphorylating EEF2 kinase (EEF2K), which leads to its inhibition and thus activation of EEF2. Also plays a role in feedback regulation of mTORC2 by mTORC1 by phosphorylating MAPKAP1/SIN1, MTOR and RICTOR, resulting in the inhibition of mTORC2 and AKT1 signaling. Also involved in feedback regulation of mTORC1 and mTORC2 by phosphorylating DEPTOR. Mediates cell survival by phosphorylating the pro-apoptotic protein BAD and suppressing its pro-apoptotic function. Phosphorylates mitochondrial URI1 leading to dissociation of a URI1-PPP1CC complex. The free mitochondrial PPP1CC can then dephosphorylate RPS6KB1 at Thr-412, which is proposed to be a negative feedback mechanism for the RPS6KB1 anti-apoptotic function. Mediates TNF-alpha-induced insulin resistance by phosphorylating IRS1 at multiple serine residues, resulting in accelerated degradation of IRS1. In cells lacking functional TSC1-2 complex, constitutively phosphorylates and inhibits GSK3B. May be involved in cytoskeletal rearrangement through binding to neurabin. Phosphorylates and activates the pyrimidine biosynthesis enzyme CAD, downstream of MTOR. Following activation by mTORC1, phosphorylates EPRS and thereby plays a key role in fatty acid uptake by adipocytes and also most probably in interferon-gamma-induced translation inhibition. The protein is Ribosomal protein S6 kinase beta-1 (Rps6kb1) of Mus musculus (Mouse).